The primary structure comprises 150 residues: UPF0756 membrane protein NTHI1233 (150 aa).

The next 4 membrane-spanning stretches (helical) occupy residues 1-21, 52-72, 81-101, and 123-143; these read MTLQ…LGVL, YGVK…LVSG, GFLS…AWLA, and IIGV…AGIL.

The protein belongs to the UPF0756 family.

The protein localises to the cell membrane. This is UPF0756 membrane protein NTHI1233 from Haemophilus influenzae (strain 86-028NP).